The primary structure comprises 229 residues: C-&gt;U-editing enzyme APOBEC-1 (229 aa).

Positions 10 to 134 (VDPTLRRRIE…PRNRQGLRDL (125 aa)) constitute a CMP/dCMP-type deaminase domain. Residue histidine 61 participates in Zn(2+) binding. The Proton donor role is filled by glutamate 63. Positions 93 and 96 each coordinate Zn(2+).

Belongs to the cytidine and deoxycytidylate deaminase family. Homodimer. Interacts with A1CF; form an mRNA editing complex. Interacts with RBM47; form an mRNA editing complex. Found in a complex with CELF2/CUGBP2 and A1CF. Interacts with HNRPAB. Interacts with SYNCRIP. Requires Zn(2+) as cofactor. As to expression, expressed in the liver as well as small intestine.

It localises to the cytoplasm. The protein localises to the nucleus. The catalysed reaction is a cytidine in mRNA + H2O + H(+) = a uridine in mRNA + NH4(+). It catalyses the reaction cytidine(6666) in apoB mRNA + H2O + H(+) = uridine(6666) in apoB mRNA + NH4(+). Its function is as follows. Cytidine deaminase catalyzing the cytidine to uridine postranscriptional editing of a variety of mRNAs. Form complexes with cofactors that confer differential editing activity and selectivity. Responsible for the postranscriptional editing of a CAA codon for Gln to a UAA codon for stop in the apolipoprotein B mRNA. Also involved in CGA (Arg) to UGA (Stop) editing in the NF1 mRNA. May also play a role in the epigenetic regulation of gene expression by participating in DNA demethylation. The polypeptide is C-&gt;U-editing enzyme APOBEC-1 (Rattus norvegicus (Rat)).